The sequence spans 574 residues: Aspartate--tRNA ligase (574 aa).

An L-aspartate-binding site is contributed by E169. An aspartate region spans residues 193–196 (QLFK). R215 lines the L-aspartate pocket. ATP contacts are provided by residues 215-217 (RDE) and Q224. L-aspartate is bound at residue H437. E471 is a binding site for ATP. R478 serves as a coordination point for L-aspartate. Position 523–526 (523–526 (GLDR)) interacts with ATP.

This sequence belongs to the class-II aminoacyl-tRNA synthetase family. Type 1 subfamily. Homodimer.

Its subcellular location is the cytoplasm. The enzyme catalyses tRNA(Asp) + L-aspartate + ATP = L-aspartyl-tRNA(Asp) + AMP + diphosphate. Its function is as follows. Catalyzes the attachment of L-aspartate to tRNA(Asp) in a two-step reaction: L-aspartate is first activated by ATP to form Asp-AMP and then transferred to the acceptor end of tRNA(Asp). This chain is Aspartate--tRNA ligase, found in Mycoplasma mycoides subsp. mycoides SC (strain CCUG 32753 / NCTC 10114 / PG1).